The sequence spans 194 residues: Probable GTP-binding protein EngB (194 aa).

The 173-residue stretch at 22–194 (DLPEYALAGR…AWQFIKEGME (173 aa)) folds into the EngB-type G domain. Residues 30-37 (GRSNVGKS), 57-61 (GKTQT), 75-78 (DVPG), 142-145 (TKAD), and 174-176 (FSS) contribute to the GTP site. Mg(2+)-binding residues include Ser37 and Thr59.

Belongs to the TRAFAC class TrmE-Era-EngA-EngB-Septin-like GTPase superfamily. EngB GTPase family. It depends on Mg(2+) as a cofactor.

Its function is as follows. Necessary for normal cell division and for the maintenance of normal septation. The protein is Probable GTP-binding protein EngB of Listeria monocytogenes serovar 1/2a (strain ATCC BAA-679 / EGD-e).